Consider the following 256-residue polypeptide: uncharacterized protein (256 aa).

This is an uncharacterized protein from Acanthamoeba polyphaga mimivirus (APMV).